Consider the following 395-residue polypeptide: Multidrug resistance protein MdtL (395 aa).

12 helical membrane passes run Phe-4 to Val-24, Ile-42 to Ala-62, Pro-69 to Ser-89, Leu-93 to Phe-113, Leu-131 to Met-151, Ser-158 to Leu-178, Val-217 to Phe-237, Ala-247 to Phe-267, Thr-271 to His-291, Val-295 to Met-315, Val-328 to Ile-350, and Ala-355 to Val-377.

This sequence belongs to the major facilitator superfamily. DHA1 family. MdtL (TC 2.A.1.2.22) subfamily.

It is found in the cell inner membrane. The chain is Multidrug resistance protein MdtL from Salmonella schwarzengrund (strain CVM19633).